The chain runs to 504 residues: Immunoglobulin-binding protein EibC (504 aa).

The first 26 residues, 1–26 (MSKKFTMTLLSSSLAGLLVMSGGVSA), serve as a signal peptide directing secretion. The surface exposed passenger domain stretch occupies residues 27 to 413 (QEEKYTVPYA…IAANTRTLQQ (387 aa)). Topologically, residues 27 to 453 (QEEKYTVPYA…GLFQPYSVGK (427 aa)) are extracellular. Positions 154-280 (DAKASGEFSV…TGTESDKTYG (127 aa)) are head domain. Residues 281–296 (TRVLGGLSDGTRNSDA) form a neck region. The interval 297–342 (ATVGQLNRKVGGVYDDVKARITVESEKQKKYTDQKTSEVNEKVEAR) is right-handed coiled-coil (RHcc). The interval 343-368 (TTVGVDSDGKLTRAEGATKTIAVNDG) is saddle domain. The tract at residues 369-434 (LVALSGRTDR…INENHKEMKR (66 aa)) is left-handed coiled-coil (LHcc). Residues 411–438 (LQQHSARLDSQQRQINENHKEMKRAAAQ) are a coiled coil. The tract at residues 411–453 (LQQHSARLDSQQRQINENHKEMKRAAAQSAALTGLFQPYSVGK) is outer membrane translocation of the passenger domain. 4 beta stranded membrane passes run 454-464 (FNATAAVGGYS), 467-478 (QALAVGVGYRFN), 481-490 (TAAKAGVAFS), and 494-504 (ASWNVGVNFEF). The translocator domain stretch occupies residues 454-504 (FNATAAVGGYSDQQALAVGVGYRFNEQTAAKAGVAFSDGDASWNVGVNFEF).

The protein belongs to the autotransporter-2 (AT-2) (TC 1.B.40) family. Eib subfamily. As to quaternary structure, homotrimer; can probably form mixed heterotrimers in vivo. Will form mixed heterotrimers with EibD; these are correctly located in the outer membrane and bind IgG Fc, although less well than homotrimers. In denaturing gels runs as a band of about 200 kDa. Binds the Fc portion of immunoglobulins; binds more than 1 Fc per subunit.

The protein localises to the cell surface. It localises to the cell outer membrane. Its function is as follows. Binds (in a non-immune fashion) to the Fc portion of human IgG and less well to IgA; binding occurs on the cell surface. Confers the ability to survive exposure to human serum exposure. Binds to the Fc portion of human IgG and IgA and to whole mouse antibodies also via Fc. The chain is Immunoglobulin-binding protein EibC from Escherichia coli.